A 310-amino-acid polypeptide reads, in one-letter code: Ribosomal RNA small subunit methyltransferase H (310 aa).

Residues 33-35 (AGH), aspartate 53, phenylalanine 79, aspartate 100, and glutamine 107 contribute to the S-adenosyl-L-methionine site.

Belongs to the methyltransferase superfamily. RsmH family.

The protein localises to the cytoplasm. It carries out the reaction cytidine(1402) in 16S rRNA + S-adenosyl-L-methionine = N(4)-methylcytidine(1402) in 16S rRNA + S-adenosyl-L-homocysteine + H(+). In terms of biological role, specifically methylates the N4 position of cytidine in position 1402 (C1402) of 16S rRNA. This is Ribosomal RNA small subunit methyltransferase H from Clostridium tetani (strain Massachusetts / E88).